The chain runs to 429 residues: Alpha-L-rhamnosidase rgxB (429 aa).

The signal sequence occupies residues Met1–Ser20. 7 N-linked (GlcNAc...) asparagine glycosylation sites follow: Asn67, Asn77, Asn97, Asn103, Asn112, Asn135, and Asn219. The stretch at Ser217–Ala238 is one PbH1 1 repeat. Residue Asp231 is the Proton donor of the active site. N-linked (GlcNAc...) asparagine glycosylation is found at Asn239, Asn247, Asn278, and Asn344. 2 PbH1 repeats span residues Ser240–Ser260 and Val271–Thr292. Residues Cys374 and Cys380 are joined by a disulfide bond. N-linked (GlcNAc...) asparagine glycosylation is found at Asn387, Asn395, and Asn414.

This sequence belongs to the glycosyl hydrolase 28 family.

It localises to the secreted. The catalysed reaction is Hydrolysis of terminal non-reducing alpha-L-rhamnose residues in alpha-L-rhamnosides.. Its function is as follows. Alpha-L-rhamnosidase which is able to degrade p-nitrophenyl-alpha-L-rhamnopyranoside (pnp_Rha). The natural substrate of this enzyme has not been identified yet. The polypeptide is Alpha-L-rhamnosidase rgxB (rgxB) (Aspergillus niger (strain ATCC MYA-4892 / CBS 513.88 / FGSC A1513)).